Consider the following 486-residue polypeptide: NADH-quinone oxidoreductase subunit N 1 (486 aa).

A run of 14 helical transmembrane segments spans residues 15–35, 46–66, 72–92, 111–128, 131–151, 166–186, 208–228, 241–261, 276–296, 303–323, 331–351, 375–395, 410–432, and 455–475; these read FLPEIILTVMGTLLMVLDPVI, ISLIALVMALGASIYAYGIAG, MLMVDGFATFFRVVVITVGIL, YHALLLFSIAGQCLMAAS, LIMVFIGLEISSIASYVLAGY, FLLGSFATGFFLYGVAWIYGL, FVGIAAALMFVGLAFKVSAAP, PTPVSAFLSAGPKAAAFAIFL, QPLVWTAALASMCIGNFAAIL, MLAYSSIAHAGYVLVALTAHS, MFYLAGYAFMNVGAFAAVSVL, AAMFTIFLLSLLGVPLTGGFF, IWLTVLGLLNSAVGAYYYLRILV, and FALILPALGTLALGIFPGWVL.

The protein belongs to the complex I subunit 2 family. As to quaternary structure, NDH-1 is composed of 14 different subunits. Subunits NuoA, H, J, K, L, M, N constitute the membrane sector of the complex.

The protein localises to the cell inner membrane. It carries out the reaction a quinone + NADH + 5 H(+)(in) = a quinol + NAD(+) + 4 H(+)(out). NDH-1 shuttles electrons from NADH, via FMN and iron-sulfur (Fe-S) centers, to quinones in the respiratory chain. The immediate electron acceptor for the enzyme in this species is believed to be ubiquinone. Couples the redox reaction to proton translocation (for every two electrons transferred, four hydrogen ions are translocated across the cytoplasmic membrane), and thus conserves the redox energy in a proton gradient. This Solibacter usitatus (strain Ellin6076) protein is NADH-quinone oxidoreductase subunit N 1.